Reading from the N-terminus, the 283-residue chain is MEIIERAPAKINLGLDVLHKRVDGYHEVESIFASVDLADHLTFENLEEDIIRIETDSSFLPVDRRNHVYQAVDLLKRTYNIHKGIKIYIEKRIPVAAGLAGGSSDCAAALRGLNKLWNLGLTMDELCEIGSQIGMDVPYCLRGGTAFANGRGEKIEALPTMPQCWIVLVKPRISVSTSTVFNDLAVDELHHPDIAGLRIAIENGDYTGMTQTVGNALESVTIARHPIVQQIKDRMLKYGADAALMSGSGPTVFALCEKKTRAQRIYNGLKGFCEEVYLVRTLK.

Residue Lys-10 is part of the active site. Pro-94–Ser-104 serves as a coordination point for ATP. Asp-136 is a catalytic residue.

This sequence belongs to the GHMP kinase family. IspE subfamily.

It carries out the reaction 4-CDP-2-C-methyl-D-erythritol + ATP = 4-CDP-2-C-methyl-D-erythritol 2-phosphate + ADP + H(+). It participates in isoprenoid biosynthesis; isopentenyl diphosphate biosynthesis via DXP pathway; isopentenyl diphosphate from 1-deoxy-D-xylulose 5-phosphate: step 3/6. Its function is as follows. Catalyzes the phosphorylation of the position 2 hydroxy group of 4-diphosphocytidyl-2C-methyl-D-erythritol. This is 4-diphosphocytidyl-2-C-methyl-D-erythritol kinase from Enterococcus faecalis (strain ATCC 700802 / V583).